The following is a 456-amino-acid chain: Phosphomethylpyrimidine synthase (456 aa).

Residues Asn80, Met109, Tyr139, His175, 195–197 (SRG), 236–239 (DSLR), and Glu275 contribute to the substrate site. Zn(2+) is bound at residue His279. A substrate-binding site is contributed by Tyr302. His343 provides a ligand contact to Zn(2+). Cys423, Cys426, and Cys431 together coordinate [4Fe-4S] cluster.

It belongs to the ThiC family. [4Fe-4S] cluster is required as a cofactor.

It carries out the reaction 5-amino-1-(5-phospho-beta-D-ribosyl)imidazole + S-adenosyl-L-methionine = 4-amino-2-methyl-5-(phosphooxymethyl)pyrimidine + CO + 5'-deoxyadenosine + formate + L-methionine + 3 H(+). The protein operates within cofactor biosynthesis; thiamine diphosphate biosynthesis. Its function is as follows. Catalyzes the synthesis of the hydroxymethylpyrimidine phosphate (HMP-P) moiety of thiamine from aminoimidazole ribotide (AIR) in a radical S-adenosyl-L-methionine (SAM)-dependent reaction. The sequence is that of Phosphomethylpyrimidine synthase from Synechococcus elongatus (strain ATCC 33912 / PCC 7942 / FACHB-805) (Anacystis nidulans R2).